The primary structure comprises 739 residues: Phosphoribosylformylglycinamidine synthase subunit PurL (739 aa).

Residue histidine 54 is part of the active site. Tyrosine 57 and lysine 96 together coordinate ATP. Position 98 (glutamate 98) interacts with Mg(2+). Residues 99-102 and arginine 121 each bind substrate; that span reads SHNH. Histidine 100 acts as the Proton acceptor in catalysis. Aspartate 122 contacts Mg(2+). Glutamine 245 is a substrate binding site. Aspartate 273 is a Mg(2+) binding site. 317–319 is a binding site for substrate; that stretch reads ESQ. ATP is bound by residues aspartate 500 and glycine 537. Asparagine 538 provides a ligand contact to Mg(2+). Residue serine 540 coordinates substrate.

It belongs to the FGAMS family. As to quaternary structure, monomer. Part of the FGAM synthase complex composed of 1 PurL, 1 PurQ and 2 PurS subunits.

The protein localises to the cytoplasm. It carries out the reaction N(2)-formyl-N(1)-(5-phospho-beta-D-ribosyl)glycinamide + L-glutamine + ATP + H2O = 2-formamido-N(1)-(5-O-phospho-beta-D-ribosyl)acetamidine + L-glutamate + ADP + phosphate + H(+). It functions in the pathway purine metabolism; IMP biosynthesis via de novo pathway; 5-amino-1-(5-phospho-D-ribosyl)imidazole from N(2)-formyl-N(1)-(5-phospho-D-ribosyl)glycinamide: step 1/2. Part of the phosphoribosylformylglycinamidine synthase complex involved in the purines biosynthetic pathway. Catalyzes the ATP-dependent conversion of formylglycinamide ribonucleotide (FGAR) and glutamine to yield formylglycinamidine ribonucleotide (FGAM) and glutamate. The FGAM synthase complex is composed of three subunits. PurQ produces an ammonia molecule by converting glutamine to glutamate. PurL transfers the ammonia molecule to FGAR to form FGAM in an ATP-dependent manner. PurS interacts with PurQ and PurL and is thought to assist in the transfer of the ammonia molecule from PurQ to PurL. The protein is Phosphoribosylformylglycinamidine synthase subunit PurL of Bacillus mycoides (strain KBAB4) (Bacillus weihenstephanensis).